A 446-amino-acid polypeptide reads, in one-letter code: Dimethylsulfoniopropionate lyase DddP (446 aa).

The span at 1–13 (MNQHYSETRKIDP) shows a compositional bias: basic and acidic residues. The tract at residues 1–30 (MNQHYSETRKIDPSRGATLGDNTPNDNNRI) is disordered. Residues aspartate 295, aspartate 297, aspartate 307, histidine 371, glutamate 406, and glutamate 421 each contribute to the a divalent metal cation site.

This sequence belongs to the peptidase M24B family. In terms of assembly, homodimer. A divalent metal cation is required as a cofactor.

The enzyme catalyses S,S-dimethyl-beta-propiothetin = acrylate + dimethyl sulfide + H(+). Able to cleave dimethylsulfoniopropionate (DMSP), releasing dimethyl sulfide (DMS). DMS is the principal form by which sulfur is transported from oceans to the atmosphere. The real activity of the protein is however subject to debate and it is unclear whether it constitutes a real dimethylsulfoniopropionate lyase in vivo: the low activity with DMSP as substrate suggests that DMSP is not its native substrate. In Roseovarius nubinhibens (strain ATCC BAA-591 / DSM 15170 / ISM), this protein is Dimethylsulfoniopropionate lyase DddP.